We begin with the raw amino-acid sequence, 118 residues long: Ribonuclease P protein component (118 aa).

This sequence belongs to the RnpA family. Consists of a catalytic RNA component (M1 or rnpB) and a protein subunit.

It carries out the reaction Endonucleolytic cleavage of RNA, removing 5'-extranucleotides from tRNA precursor.. Functionally, RNaseP catalyzes the removal of the 5'-leader sequence from pre-tRNA to produce the mature 5'-terminus. It can also cleave other RNA substrates such as 4.5S RNA. The protein component plays an auxiliary but essential role in vivo by binding to the 5'-leader sequence and broadening the substrate specificity of the ribozyme. This is Ribonuclease P protein component from Shewanella oneidensis (strain ATCC 700550 / JCM 31522 / CIP 106686 / LMG 19005 / NCIMB 14063 / MR-1).